The chain runs to 233 residues: Endo-1,4-beta-xylanase 1 (233 aa).

Residues 1–20 (MVSFTSIVTAVVALAGSALA) form the signal peptide. N27 carries N-linked (GlcNAc...) asparagine glycosylation. One can recognise a GH11 domain in the interval 40-230 (QSTPSSTGRH…SAGNSNINVQ (191 aa)). Catalysis depends on E126, which acts as the Nucleophile. The Proton donor role is filled by E217.

The protein belongs to the glycosyl hydrolase 11 (cellulase G) family.

Its subcellular location is the secreted. It catalyses the reaction Endohydrolysis of (1-&gt;4)-beta-D-xylosidic linkages in xylans.. It functions in the pathway glycan degradation; xylan degradation. Endo-1,4-beta-xylanase involved in the hydrolysis of xylan, a major structural heterogeneous polysaccharide found in plant biomass representing the second most abundant polysaccharide in the biosphere, after cellulose. Accounts for approximately 70 percent of the endoxylanase activity in the culture filtrate. This chain is Endo-1,4-beta-xylanase 1 (XYL1), found in Pyricularia grisea (Crabgrass-specific blast fungus).